The chain runs to 334 residues: L-lactate dehydrogenase B-B chain (334 aa).

Residues 30–58 (GQVG…VEDK) and Arg-100 contribute to the NAD(+) site. Residues Arg-107, Asn-139, and Arg-170 each coordinate substrate. Asn-139 lines the NAD(+) pocket. His-194 (proton acceptor) is an active-site residue. Position 249 (Thr-249) interacts with substrate.

Belongs to the LDH/MDH superfamily. LDH family. As to quaternary structure, homotetramer.

Its subcellular location is the cytoplasm. It carries out the reaction (S)-lactate + NAD(+) = pyruvate + NADH + H(+). Its pathway is fermentation; pyruvate fermentation to lactate; (S)-lactate from pyruvate: step 1/1. This is L-lactate dehydrogenase B-B chain from Danio rerio (Zebrafish).